A 147-amino-acid polypeptide reads, in one-letter code: Hemoglobin subunit beta (147 aa).

An N-acetylvaline modification is found at valine 2. Positions 3-147 (HLTAEEKAAV…VATALAHKYH (145 aa)) constitute a Globin domain. Threonine 13 is subject to Phosphothreonine. At serine 45 the chain carries Phosphoserine. At lysine 60 the chain carries N6-acetyllysine. Histidine 64 is a heme b binding site. The residue at position 83 (lysine 83) is an N6-acetyllysine. Residue histidine 93 participates in heme b binding. Position 94 is an S-nitrosocysteine (cysteine 94). At lysine 145 the chain carries N6-acetyllysine.

The protein belongs to the globin family. In terms of assembly, heterotetramer of two alpha chains and two beta chains. Red blood cells.

Involved in oxygen transport from the lung to the various peripheral tissues. The sequence is that of Hemoglobin subunit beta (HBB) from Carlito syrichta (Philippine tarsier).